The chain runs to 676 residues: Urocanate hydratase (676 aa).

Positions 15–35 (PLPENRGRQAGVPHAPVRTPS) are disordered. NAD(+)-binding positions include 126-127 (GG), Gln-204, 251-253 (GMS), Glu-271, 317-318 (NV), 343-347 (QTSCH), 354-355 (YY), Tyr-403, and Gly-594.

The protein belongs to the urocanase family. NAD(+) serves as cofactor.

It carries out the reaction 4-imidazolone-5-propanoate = trans-urocanate + H2O. Its pathway is amino-acid degradation; L-histidine degradation into L-glutamate; N-formimidoyl-L-glutamate from L-histidine: step 2/3. In Homo sapiens (Human), this protein is Urocanate hydratase (UROC1).